We begin with the raw amino-acid sequence, 217 residues long: Coiled-coil domain-containing protein 124-A (217 aa).

The interval 1–128 is disordered; sequence MPKKFQGENT…HLEMPLEENV (128 aa). Basic and acidic residues-rich tracts occupy residues 18–45, 52–74, and 95–128; these read RKAE…DDKH, RKED…QRLL, and TRAE…EENV. A coiled-coil region spans residues 46-82; sequence VARKGQRKEDKEKKRLEQLERKKESQRLLDEEDSKMK.

It belongs to the CCDC124 family. In terms of assembly, associates with translationally inactive ribosomes in the nonrotated state.

It localises to the cytoplasm. The protein localises to the cytoskeleton. Its subcellular location is the microtubule organizing center. It is found in the centrosome. The protein resides in the midbody. Its function is as follows. Ribosome-binding protein involved in ribosome hibernation: associates with translationally inactive ribosomes and stabilizes the nonrotated conformation of the 80S ribosome, thereby promoting ribosome preservation and storage. The polypeptide is Coiled-coil domain-containing protein 124-A (ccdc124-a) (Xenopus laevis (African clawed frog)).